The chain runs to 373 residues: Dual-specificity RNA methyltransferase RlmN (373 aa).

Residue E94 is the Proton acceptor of the active site. The region spanning 100-339 (EDDRATLCVS…VIVRKTRGDD (240 aa)) is the Radical SAM core domain. A disulfide bond links C107 and C344. [4Fe-4S] cluster contacts are provided by C114, C118, and C121. S-adenosyl-L-methionine contacts are provided by residues 168–169 (GE), S200, 222–224 (SIH), and N301. The active-site S-methylcysteine intermediate is C344.

Belongs to the radical SAM superfamily. RlmN family. [4Fe-4S] cluster is required as a cofactor.

The protein localises to the cytoplasm. It catalyses the reaction adenosine(2503) in 23S rRNA + 2 reduced [2Fe-2S]-[ferredoxin] + 2 S-adenosyl-L-methionine = 2-methyladenosine(2503) in 23S rRNA + 5'-deoxyadenosine + L-methionine + 2 oxidized [2Fe-2S]-[ferredoxin] + S-adenosyl-L-homocysteine. The catalysed reaction is adenosine(37) in tRNA + 2 reduced [2Fe-2S]-[ferredoxin] + 2 S-adenosyl-L-methionine = 2-methyladenosine(37) in tRNA + 5'-deoxyadenosine + L-methionine + 2 oxidized [2Fe-2S]-[ferredoxin] + S-adenosyl-L-homocysteine. Functionally, specifically methylates position 2 of adenine 2503 in 23S rRNA and position 2 of adenine 37 in tRNAs. m2A2503 modification seems to play a crucial role in the proofreading step occurring at the peptidyl transferase center and thus would serve to optimize ribosomal fidelity. In Shewanella oneidensis (strain ATCC 700550 / JCM 31522 / CIP 106686 / LMG 19005 / NCIMB 14063 / MR-1), this protein is Dual-specificity RNA methyltransferase RlmN.